The primary structure comprises 221 residues: Protein-L-isoaspartate O-methyltransferase (221 aa).

Ser60 is a catalytic residue.

The protein belongs to the methyltransferase superfamily. L-isoaspartyl/D-aspartyl protein methyltransferase family.

The protein resides in the cytoplasm. The enzyme catalyses [protein]-L-isoaspartate + S-adenosyl-L-methionine = [protein]-L-isoaspartate alpha-methyl ester + S-adenosyl-L-homocysteine. Catalyzes the methyl esterification of L-isoaspartyl residues in peptides and proteins that result from spontaneous decomposition of normal L-aspartyl and L-asparaginyl residues. It plays a role in the repair and/or degradation of damaged proteins. The polypeptide is Protein-L-isoaspartate O-methyltransferase (Rhodospirillum centenum (strain ATCC 51521 / SW)).